Reading from the N-terminus, the 252-residue chain is Large ribosomal subunit protein uL10m (252 aa).

The transit peptide at 1 to 24 (MAATLCCRLLPKAGWVPLTQSVRH) directs the protein to the mitochondrion.

The protein belongs to the universal ribosomal protein uL10 family. Component of the mitochondrial ribosome large subunit (39S) which comprises a 16S rRNA and about 50 distinct proteins.

The protein resides in the mitochondrion. The sequence is that of Large ribosomal subunit protein uL10m (mrpl10) from Danio rerio (Zebrafish).